A 192-amino-acid chain; its full sequence is Acetolactate synthase small subunit (192 aa).

Residues 29-103 (IITVKVRNEM…DTLKVSDLTD (75 aa)) form the ACT domain.

It belongs to the acetolactate synthase small subunit family. In terms of assembly, dimer of large and small chains.

It carries out the reaction 2 pyruvate + H(+) = (2S)-2-acetolactate + CO2. It participates in amino-acid biosynthesis; L-isoleucine biosynthesis; L-isoleucine from 2-oxobutanoate: step 1/4. Its pathway is amino-acid biosynthesis; L-valine biosynthesis; L-valine from pyruvate: step 1/4. The sequence is that of Acetolactate synthase small subunit (ilvH) from Aquifex aeolicus (strain VF5).